The sequence spans 329 residues: Acetyl-coenzyme A carboxylase carboxyl transferase subunit alpha (329 aa).

Residues 40–294 (QLETLAARRR…REALERNLSE (255 aa)) enclose the CoA carboxyltransferase C-terminal domain.

This sequence belongs to the AccA family. As to quaternary structure, acetyl-CoA carboxylase is a heterohexamer composed of biotin carboxyl carrier protein (AccB), biotin carboxylase (AccC) and two subunits each of ACCase subunit alpha (AccA) and ACCase subunit beta (AccD).

The protein resides in the cytoplasm. It carries out the reaction N(6)-carboxybiotinyl-L-lysyl-[protein] + acetyl-CoA = N(6)-biotinyl-L-lysyl-[protein] + malonyl-CoA. Its pathway is lipid metabolism; malonyl-CoA biosynthesis; malonyl-CoA from acetyl-CoA: step 1/1. Functionally, component of the acetyl coenzyme A carboxylase (ACC) complex. First, biotin carboxylase catalyzes the carboxylation of biotin on its carrier protein (BCCP) and then the CO(2) group is transferred by the carboxyltransferase to acetyl-CoA to form malonyl-CoA. The polypeptide is Acetyl-coenzyme A carboxylase carboxyl transferase subunit alpha (Synechococcus sp. (strain CC9311)).